Reading from the N-terminus, the 113-residue chain is Transcription initiation factor IIA subunit 2 (113 aa).

The protein belongs to the TFIIA subunit 2 family. In terms of assembly, TFIIA is a heterodimer of the large unprocessed subunit 1 and a small subunit gamma. It was originally believed to be a heterotrimer of an alpha, a beta and a gamma subunit.

It is found in the nucleus. Its function is as follows. TFIIA is a component of the transcription machinery of RNA polymerase II and plays an important role in transcriptional activation. TFIIA in a complex with TBP mediates transcriptional activity. This chain is Transcription initiation factor IIA subunit 2, found in Caenorhabditis elegans.